The primary structure comprises 401 residues: Exodeoxyribonuclease 7 large subunit (401 aa).

Belongs to the XseA family. As to quaternary structure, heterooligomer composed of large and small subunits.

It is found in the cytoplasm. It carries out the reaction Exonucleolytic cleavage in either 5'- to 3'- or 3'- to 5'-direction to yield nucleoside 5'-phosphates.. Its function is as follows. Bidirectionally degrades single-stranded DNA into large acid-insoluble oligonucleotides, which are then degraded further into small acid-soluble oligonucleotides. This Syntrophotalea carbinolica (strain DSM 2380 / NBRC 103641 / GraBd1) (Pelobacter carbinolicus) protein is Exodeoxyribonuclease 7 large subunit.